The following is a 365-amino-acid chain: Histidinol-phosphate aminotransferase (365 aa).

Lys-227 carries the post-translational modification N6-(pyridoxal phosphate)lysine.

It belongs to the class-II pyridoxal-phosphate-dependent aminotransferase family. Histidinol-phosphate aminotransferase subfamily. Homodimer. Pyridoxal 5'-phosphate is required as a cofactor.

It carries out the reaction L-histidinol phosphate + 2-oxoglutarate = 3-(imidazol-4-yl)-2-oxopropyl phosphate + L-glutamate. It functions in the pathway amino-acid biosynthesis; L-histidine biosynthesis; L-histidine from 5-phospho-alpha-D-ribose 1-diphosphate: step 7/9. The polypeptide is Histidinol-phosphate aminotransferase (Polaromonas naphthalenivorans (strain CJ2)).